Reading from the N-terminus, the 185-residue chain is Cytidylate kinase (185 aa).

ATP is bound at residue Gly-8–Thr-16.

The protein belongs to the cytidylate kinase family. Type 2 subfamily.

It localises to the cytoplasm. It catalyses the reaction CMP + ATP = CDP + ADP. It carries out the reaction dCMP + ATP = dCDP + ADP. The sequence is that of Cytidylate kinase from Desulfurococcus amylolyticus (strain DSM 18924 / JCM 16383 / VKM B-2413 / 1221n) (Desulfurococcus kamchatkensis).